Reading from the N-terminus, the 3421-residue chain is Hemocyanin 2 (3421 aa).

The first 19 residues, 1 to 19, serve as a signal peptide directing secretion; it reads MWTILALLTATLLFEGAFS. The tract at residues 20–442 is functional unit a (wall); that stretch reads VDTVVRKNVD…KPPVPVAQAN (423 aa). Histidine 62 serves as a coordination point for Cu cation. An intrachain disulfide couples cysteine 68 to cysteine 78. A cross-link (2'-(S-cysteinyl)-histidine (Cys-His)) is located at residues 79 to 81; sequence CLH. Cu cation-binding residues include histidine 81, histidine 90, histidine 200, histidine 204, and histidine 231. 2 disulfides stabilise this stretch: cysteine 190-cysteine 257 and cysteine 344-cysteine 356. Asparagine 408 is a glycosylation site (N-linked (GlcNAc...) asparagine). The functional unit b (wall) stretch occupies residues 443-853; it reads LAVRKNINDL…RADAKDFGHS (411 aa). Position 483 (histidine 483) interacts with Cu cation. The cysteines at positions 489 and 500 are disulfide-linked. Residues 501-503 constitute a cross-link (2'-(S-cysteinyl)-histidine (Cys-His)); sequence CVH. Histidine 503, histidine 512, histidine 622, histidine 626, histidine 653, and histidine 894 together coordinate Cu cation. Cysteine 612 and cysteine 678 are oxidised to a cystine. The WD 1 repeat unit spans residues 632–673; that stretch reads SEKYSMSSLHYTAFDPIFYLHHSNVDRLWAIWQALQIRRGKS. Residues 854–1275 form a functional unit c (wall) region; that stretch reads RKIRKAVDSL…DEYREAVTSA (422 aa). Cysteine 900 and cysteine 911 are oxidised to a cystine. The segment at residues 912 to 914 is a cross-link (2'-(S-cysteinyl)-histidine (Cys-His)); it reads CVH. Positions 914, 923, 1033, 1037, and 1063 each coordinate Cu cation. 2 disulfide bridges follow: cysteine 1023-cysteine 1090 and cysteine 1180-cysteine 1187. A WD 2 repeat occupies 1043–1084; it reads NEPYSMSSLRYTTYDPIFFLHRSNTDRLWAIWQALQKYRGKP. Asparagine 1183 is a glycosylation site (N-linked (GlcNAc...) asparagine). The functional unit d (wall) stretch occupies residues 1276–1685; the sequence is SHIRKNIRDL…NIYYDGLSQH (410 aa). Histidine 1313 is a Cu cation binding site. Residues cysteine 1319 and cysteine 1328 are joined by a disulfide bond. The segment at residues 1329–1331 is a cross-link (2'-(S-cysteinyl)-histidine (Cys-His)); it reads CVH. The Cu cation site is built by histidine 1331 and histidine 1340. One copy of the WD 3 repeat lies at 1387–1425; it reads QTFDPNPFFRGHIAFENAVTSRDPQPELWDNKDFYENVM. Cystine bridges form between cysteine 1434/cysteine 1501 and cysteine 1590/cysteine 1599. Histidine 1444, histidine 1448, and histidine 1475 together coordinate Cu cation. One copy of the WD 4 repeat lies at 1454–1495; sequence RAKYSLSSLDYTAFDPVFFLHHANVDRIWAIWQDLQRYRKKP. The N-linked (GlcNAc...) asparagine glycan is linked to asparagine 1653. The functional unit e (wall) stretch occupies residues 1686 to 2102; the sequence is NLVRKEVSSL…HGINVRHVGR (417 aa). Position 1726 (histidine 1726) interacts with Cu cation. The cysteines at positions 1732 and 1743 are disulfide-linked. The segment at residues 1744–1746 is a cross-link (2'-(S-cysteinyl)-histidine (Cys-His)); it reads CLH. Cu cation-binding residues include histidine 1746, histidine 1755, histidine 1868, histidine 1872, and histidine 1899. 2 disulfide bridges follow: cysteine 1858–cysteine 1925 and cysteine 2014–cysteine 2020. A WD 5 repeat occupies 1878 to 1919; the sequence is SKTHSIGHLHYASYDPLFYIHHSQTDRIWAIWQALQEHRGLS. A functional unit f (wall) region spans residues 2103 to 2522; sequence NRIRMELSEL…DDHGSDHIAG (420 aa). Residue histidine 2143 coordinates Cu cation. Residues cysteine 2149 and cysteine 2159 are joined by a disulfide bond. A cross-link (2'-(S-cysteinyl)-histidine (Cys-His)) is located at residues 2160–2162; that stretch reads CIH. Cu cation is bound by residues histidine 2162, histidine 2171, histidine 2281, histidine 2285, and histidine 2312. One copy of the WD 6 repeat lies at 2168–2204; the sequence is PHWHRLYTLQMDMALLSHGSAVAIPYWDWTKPISKLP. 2 disulfides stabilise this stretch: cysteine 2271–cysteine 2338 and cysteine 2425–cysteine 2431. Positions 2523–2929 are functional unit g (internal arc); sequence SGVRKDVTSL…SGHDHSERHD (407 aa). Histidine 2563 is a Cu cation binding site. The cysteines at positions 2569 and 2579 are disulfide-linked. The segment at residues 2580–2582 is a cross-link (2'-(S-cysteinyl)-histidine (Cys-His)); the sequence is CTH. 5 residues coordinate Cu cation: histidine 2582, histidine 2591, histidine 2691, histidine 2695, and histidine 2722. Intrachain disulfides connect cysteine 2681/cysteine 2748 and cysteine 2835/cysteine 2841. The stretch at 2700–2742 is one WD 7 repeat; the sequence is GHTPYGMSSLEYTAYDPLFYLHHSNTDRIWAIWQALQKYRGFQ. The segment at 2898–2927 is disordered; it reads PSDRIKSPTIEHHGGDHHGGDTSGHDHSER. Residues 2930 to 3421 form a functional unit h (internal slab) region; it reads GFFRKEVGSL…VRIHIHIEDE (492 aa). Histidine 2970 serves as a coordination point for Cu cation. An intrachain disulfide couples cysteine 2976 to cysteine 2986. Residues 2987–2989 constitute a cross-link (2'-(S-cysteinyl)-histidine (Cys-His)); sequence CVH. Positions 2989, 2998, 3099, 3103, and 3130 each coordinate Cu cation. 2 cysteine pairs are disulfide-bonded: cysteine 3089-cysteine 3156 and cysteine 3374-cysteine 3407. Residues 3109-3150 form a WD 8 repeat; sequence TETYSMSSLAFSAYDPVFMILHSGLDRLWIIWQELQKLRKKP.

It belongs to the tyrosinase family. Hemocyanin subfamily. As to quaternary structure, homo-didecamer and homo-multidecamer. Probably N-glycosylated. Asn-2489 is buried deeply in the protein which make it inaccessible for sugar attachment. Hemolymph.

Its subcellular location is the secreted. The protein resides in the extracellular space. Hemocyanins are copper-containing oxygen carriers occurring freely dissolved in the hemolymph of many mollusks and arthropods. The polypeptide is Hemocyanin 2 (Megathura crenulata (Giant keyhole limpet)).